The sequence spans 147 residues: Large ribosomal subunit protein uL13 (147 aa).

Belongs to the universal ribosomal protein uL13 family. Part of the 50S ribosomal subunit.

Its function is as follows. This protein is one of the early assembly proteins of the 50S ribosomal subunit, although it is not seen to bind rRNA by itself. It is important during the early stages of 50S assembly. The chain is Large ribosomal subunit protein uL13 from Micrococcus luteus (strain ATCC 4698 / DSM 20030 / JCM 1464 / CCM 169 / CCUG 5858 / IAM 1056 / NBRC 3333 / NCIMB 9278 / NCTC 2665 / VKM Ac-2230) (Micrococcus lysodeikticus).